Here is a 94-residue protein sequence, read N- to C-terminus: Protein FAM24B (94 aa).

A signal peptide spans 1 to 21 (MPVIAGGILAALLLLIVVVLC).

Belongs to the FAM24 family.

The protein localises to the secreted. This is Protein FAM24B (FAM24B) from Homo sapiens (Human).